Consider the following 122-residue polypeptide: Large ribosomal subunit protein uL14 (122 aa).

Belongs to the universal ribosomal protein uL14 family. As to quaternary structure, part of the 50S ribosomal subunit. Forms a cluster with proteins L3 and L19. In the 70S ribosome, L14 and L19 interact and together make contacts with the 16S rRNA in bridges B5 and B8.

In terms of biological role, binds to 23S rRNA. Forms part of two intersubunit bridges in the 70S ribosome. The chain is Large ribosomal subunit protein uL14 from Clostridium botulinum (strain Alaska E43 / Type E3).